A 409-amino-acid polypeptide reads, in one-letter code: Putative kinase Y4dM (409 aa).

The active-site Proton acceptor is Asp293.

Belongs to the HipA Ser/Thr kinase family.

The sequence is that of Putative kinase Y4dM from Sinorhizobium fredii (strain NBRC 101917 / NGR234).